The chain runs to 115 residues: Cholecystokinin (115 aa).

An N-terminal signal peptide occupies residues 1 to 20 (MNSGVCLCVLMAVLAAGALT). Residues 21–44 (QPVPPADPAGSGLQRAEEAPRRQL) constitute a propeptide that is removed on maturation. The disordered stretch occupies residues 23-52 (VPPADPAGSGLQRAEEAPRRQLRVSQRTDG). Ser-31 is a glycosylation site (O-linked (Xyl...) (chondroitin sulfate) serine). The residue at position 97 (Tyr-97) is a Sulfotyrosine. Phe-103 is modified (phenylalanine amide). Positions 107 to 115 (SAEEYEYPS) are excised as a propeptide. 2 positions are modified to sulfotyrosine: Tyr-111 and Tyr-113.

It belongs to the gastrin/cholecystokinin family. As to quaternary structure, binds to CCK-A receptors in the pancreas and CCK-B receptors in the brain. In terms of processing, the precursor is cleaved by proteases to produce a number of active cholecystokinins. Post-translationally, the precursor is cleaved by ACE, which removes the Gly-Arg-Arg peptide at the C-terminus, leading to mature hormone. In terms of tissue distribution, detected in cerebrospinal fluid and urine (at protein level).

It localises to the secreted. In terms of biological role, this peptide hormone induces gall bladder contraction and the release of pancreatic enzymes in the gut. Its function in the brain is not clear. Binding to CCK-A receptors stimulates amylase release from the pancreas, binding to CCK-B receptors stimulates gastric acid secretion. The chain is Cholecystokinin (CCK) from Homo sapiens (Human).